Here is a 413-residue protein sequence, read N- to C-terminus: NADPH dehydrogenase afvA (413 aa).

53-56 (APLC) lines the FMN pocket. Tyr58 contributes to the substrate binding site. Positions 88 and 130 each coordinate FMN. 211–214 (HAAH) contributes to the substrate binding site. Residues Arg264 and 370–371 (GR) each bind FMN.

The protein belongs to the NADH:flavin oxidoreductase/NADH oxidase family. NamA subfamily. FMN serves as cofactor.

The catalysed reaction is A + NADPH + H(+) = AH2 + NADP(+). The protein operates within secondary metabolite biosynthesis. Its function is as follows. NADPH dehydrogenase; part of the gene cluster that mediates the biosynthesis of aflavarin, a bicoumarin that exhibits anti-insectan activity against the fungivorous beetle C.hemipterus. The chain is NADPH dehydrogenase afvA from Aspergillus flavus (strain ATCC 200026 / FGSC A1120 / IAM 13836 / NRRL 3357 / JCM 12722 / SRRC 167).